The sequence spans 725 residues: Protein ALEX (725 aa).

7 disordered regions span residues 1–93, 177–226, 256–340, 396–481, 508–528, 584–624, and 638–675; these read MSPS…ARAQ, GAIA…PLTD, EPPL…PSQP, PILT…SPLL, PMQV…PLGH, LPGL…AASS, and ATRS…GRPR. Positions 41–51 are enriched in basic residues; sequence HLRRKPCHSRH. Over residues 260-276 the composition is skewed to polar residues; sequence GSTTTPLSIWTAPQSQV. Composition is skewed to basic and acidic residues over residues 297 to 307 and 314 to 326; these read QLSEKQPRWKE and RWKE…REGT. Pro residues-rich tracts occupy residues 423–442 and 459–473; these read PSQP…PGQP and RSLP…PRSP. Low complexity-rich tracts occupy residues 584-598 and 643-658; these read LPGL…AAAG and ATQS…EAAS.

Belongs to the ALEX family. In terms of assembly, interacts with the N-terminal region of the XLas isoforms of guanine nucleotide-binding protein G(s) subunit alpha.

It is found in the cell membrane. The protein resides in the cell projection. It localises to the ruffle. In terms of biological role, may inhibit the adenylyl cyclase-stimulating activity of guanine nucleotide-binding protein G(s) subunit alpha which is produced from the same locus in a different open reading frame. The sequence is that of Protein ALEX from Mus musculus (Mouse).